We begin with the raw amino-acid sequence, 67 residues long: UPF0434 protein Bcep1808_2639 (67 aa).

The protein belongs to the UPF0434 family.

This is UPF0434 protein Bcep1808_2639 from Burkholderia vietnamiensis (strain G4 / LMG 22486) (Burkholderia cepacia (strain R1808)).